Consider the following 286-residue polypeptide: ATP synthase gamma chain (286 aa).

This sequence belongs to the ATPase gamma chain family. As to quaternary structure, F-type ATPases have 2 components, CF(1) - the catalytic core - and CF(0) - the membrane proton channel. CF(1) has five subunits: alpha(3), beta(3), gamma(1), delta(1), epsilon(1). CF(0) has three main subunits: a, b and c.

It localises to the cell inner membrane. Produces ATP from ADP in the presence of a proton gradient across the membrane. The gamma chain is believed to be important in regulating ATPase activity and the flow of protons through the CF(0) complex. The chain is ATP synthase gamma chain from Shewanella amazonensis (strain ATCC BAA-1098 / SB2B).